A 909-amino-acid chain; its full sequence is Coatomer subunit beta'-3 (909 aa).

9 WD repeats span residues 13-52 (QRSE…ITKS), 55-94 (VTEL…KVKV), 97-136 (AHSD…ACTQ), 140-180 (GHSH…PNFT), 183-224 (AHQK…CVQT), 227-266 (GHTH…LENT), 269-309 (YGLE…ASMD), 351-390 (TCDL…RSFG), and 461-501 (QIDV…SHFD). Positions 862 to 909 (EENGHVENEGDEEEQQEEEVNEEEGVVDADSTDGAVLVNGSEVLTPHP) are disordered. A compositionally biased stretch (acidic residues) spans 870-892 (EGDEEEQQEEEVNEEEGVVDADS).

It belongs to the WD repeat COPB2 family. As to quaternary structure, oligomeric complex that consists of at least the alpha, beta, beta', gamma, delta, epsilon and zeta subunits.

The protein localises to the cytoplasm. It is found in the golgi apparatus membrane. It localises to the cytoplasmic vesicle. Its subcellular location is the COPI-coated vesicle membrane. Functionally, the coatomer is a cytosolic protein complex that binds to dilysine motifs and reversibly associates with Golgi non-clathrin-coated vesicles, which further mediate biosynthetic protein transport from the ER, via the Golgi up to the trans Golgi network. Coatomer complex is required for budding from Golgi membranes, and is essential for the retrograde Golgi-to-ER transport of dilysine-tagged proteins. This chain is Coatomer subunit beta'-3, found in Arabidopsis thaliana (Mouse-ear cress).